The chain runs to 464 residues: Transcription factor EAT1 (464 aa).

A basic motif; degenerate region spans residues 261–274 (GKGKANFATERERR). One can recognise a bHLH domain in the interval 261–310 (GKGKANFATERERREQLNVKFRTLRMLFPNPTKNDRASIVGDAIEYIDEL). The helix-loop-helix motif stretch occupies residues 275 to 310 (EQLNVKFRTLRMLFPNPTKNDRASIVGDAIEYIDEL). The disordered stretch occupies residues 338–357 (QEAAADGESSSMRPVRDDQD).

This sequence belongs to the bHLH protein family. Interacts with TDR.

Its subcellular location is the nucleus. In terms of biological role, transcription factor involved in the regulation of tapetum programmed cell death (PCD) and degradation during male reproductive development. Interacts with TDR and promote tapetal PCD by regulating the expression of RTS, and the two lipid-transfer proteins C4 and C6, which function in microspore development. Acts downstream from and interacts with TDR in the regulation of tapetal PCD. Regulates directly the aspartic protease AP25 and AP37 during tapetal PCD. May not target the cysteine protease CP1. This Oryza sativa subsp. japonica (Rice) protein is Transcription factor EAT1.